Here is a 117-residue protein sequence, read N- to C-terminus: Immunoglobulin kappa variable 1-5 (117 aa).

The signal sequence occupies residues 1-22 (MDMRVPAQLLGLLLLWLPGAKC). The interval 23 to 45 (DIQMTQSPSTLSASVGDRVTITC) is framework-1. An Ig-like domain is found at 24–117 (IQMTQSPSTL…YYCQQYNSYS (94 aa)). A disulfide bond links Cys-45 and Cys-110. A complementarity-determining-1 region spans residues 46–56 (RASQSISSWLA). Residues 57–71 (WYQQKPGKAPKLLIY) form a framework-2 region. The segment at 72–78 (KASSLES) is complementarity-determining-2. Positions 79-110 (GVPSRFSGSGSGTEFTLTISSLQPDDFATYYC) are framework-3. Residues 111 to 117 (QQYNSYS) are complementarity-determining-3.

Immunoglobulins are composed of two identical heavy chains and two identical light chains; disulfide-linked.

It localises to the secreted. The protein localises to the cell membrane. V region of the variable domain of immunoglobulin light chains that participates in the antigen recognition. Immunoglobulins, also known as antibodies, are membrane-bound or secreted glycoproteins produced by B lymphocytes. In the recognition phase of humoral immunity, the membrane-bound immunoglobulins serve as receptors which, upon binding of a specific antigen, trigger the clonal expansion and differentiation of B lymphocytes into immunoglobulins-secreting plasma cells. Secreted immunoglobulins mediate the effector phase of humoral immunity, which results in the elimination of bound antigens. The antigen binding site is formed by the variable domain of one heavy chain, together with that of its associated light chain. Thus, each immunoglobulin has two antigen binding sites with remarkable affinity for a particular antigen. The variable domains are assembled by a process called V-(D)-J rearrangement and can then be subjected to somatic hypermutations which, after exposure to antigen and selection, allow affinity maturation for a particular antigen. This chain is Immunoglobulin kappa variable 1-5, found in Homo sapiens (Human).